Here is a 286-residue protein sequence, read N- to C-terminus: D-tagatose-1,6-bisphosphate aldolase subunit KbaY (286 aa).

Residue aspartate 82 is the Proton donor of the active site. Zn(2+) is bound by residues histidine 83 and histidine 180. Glycine 181 is a binding site for dihydroxyacetone phosphate. Histidine 208 contributes to the Zn(2+) binding site. Dihydroxyacetone phosphate-binding positions include 209–211 (GAS) and 230–233 (NVAT).

It belongs to the class II fructose-bisphosphate aldolase family. TagBP aldolase KbaY subfamily. In terms of assembly, homotetramer. Forms a complex with KbaZ. Zn(2+) is required as a cofactor.

It carries out the reaction D-tagatofuranose 1,6-bisphosphate = D-glyceraldehyde 3-phosphate + dihydroxyacetone phosphate. It functions in the pathway carbohydrate metabolism; D-tagatose 6-phosphate degradation; D-glyceraldehyde 3-phosphate and glycerone phosphate from D-tagatose 6-phosphate: step 2/2. In terms of biological role, catalytic subunit of the tagatose-1,6-bisphosphate aldolase KbaYZ, which catalyzes the reversible aldol condensation of dihydroxyacetone phosphate (DHAP or glycerone-phosphate) with glyceraldehyde 3-phosphate (G3P) to produce tagatose 1,6-bisphosphate (TBP). Requires KbaZ subunit for full activity and stability. Is involved in the catabolism of N-acetylgalactosamine and D-galactosamine. This is D-tagatose-1,6-bisphosphate aldolase subunit KbaY (kbaY) from Escherichia coli.